Here is a 310-residue protein sequence, read N- to C-terminus: Protoheme IX farnesyltransferase (310 aa).

Helical transmembrane passes span 21–43, 48–70, 95–115, 118–138, 147–167, 174–194, 220–240, 243–263, and 289–309; these read LLKP…VAPV, MIAL…LNMW, GEAL…LGLA, LFAA…YSMW, IVIG…VATG, LFMF…LALF, VLVY…TGIG, LYLA…VRIW, and LFLH…GLGG.

Belongs to the UbiA prenyltransferase family. Protoheme IX farnesyltransferase subfamily. Interacts with CtaA.

The protein localises to the cell inner membrane. The enzyme catalyses heme b + (2E,6E)-farnesyl diphosphate + H2O = Fe(II)-heme o + diphosphate. Its pathway is porphyrin-containing compound metabolism; heme O biosynthesis; heme O from protoheme: step 1/1. In terms of biological role, converts heme B (protoheme IX) to heme O by substitution of the vinyl group on carbon 2 of heme B porphyrin ring with a hydroxyethyl farnesyl side group. The protein is Protoheme IX farnesyltransferase of Cereibacter sphaeroides (strain KD131 / KCTC 12085) (Rhodobacter sphaeroides).